We begin with the raw amino-acid sequence, 442 residues long: D-serine dehydratase (442 aa).

K118 is modified (N6-(pyridoxal phosphate)lysine).

The protein belongs to the serine/threonine dehydratase family. DsdA subfamily. As to quaternary structure, monomer. Pyridoxal 5'-phosphate is required as a cofactor.

The catalysed reaction is D-serine = pyruvate + NH4(+). The protein is D-serine dehydratase of Shigella sonnei (strain Ss046).